We begin with the raw amino-acid sequence, 349 residues long: Ferredoxin--NADP reductase 1 (349 aa).

The FAD site is built by glutamate 36, lysine 44, tyrosine 48, isoleucine 88, leucine 123, aspartate 290, and serine 331.

The protein belongs to the ferredoxin--NADP reductase type 2 family. As to quaternary structure, homodimer. It depends on FAD as a cofactor.

The catalysed reaction is 2 reduced [2Fe-2S]-[ferredoxin] + NADP(+) + H(+) = 2 oxidized [2Fe-2S]-[ferredoxin] + NADPH. This chain is Ferredoxin--NADP reductase 1, found in Bacillus thuringiensis (strain Al Hakam).